The primary structure comprises 296 residues: Protoheme IX farnesyltransferase (296 aa).

9 helical membrane passes run 11-31, 35-55, 84-104, 107-127, 132-152, 162-182, 208-228, 229-249, and 264-284; these read PGII…AAQG, YPLF…GCVF, VTLV…YIAA, LAMW…SLYM, VYGT…GYCA, LILL…IAIF, ITLY…GGYA, GYKY…MALS, and LFVF…VDSM.

It belongs to the UbiA prenyltransferase family. Protoheme IX farnesyltransferase subfamily.

The protein resides in the cell inner membrane. The catalysed reaction is heme b + (2E,6E)-farnesyl diphosphate + H2O = Fe(II)-heme o + diphosphate. Its pathway is porphyrin-containing compound metabolism; heme O biosynthesis; heme O from protoheme: step 1/1. Functionally, converts heme B (protoheme IX) to heme O by substitution of the vinyl group on carbon 2 of heme B porphyrin ring with a hydroxyethyl farnesyl side group. This chain is Protoheme IX farnesyltransferase, found in Pectobacterium carotovorum subsp. carotovorum (strain PC1).